The primary structure comprises 153 residues: Aspartate carbamoyltransferase regulatory chain (153 aa).

Zn(2+) is bound by residues Cys-109, Cys-114, Cys-138, and Cys-141.

The protein belongs to the PyrI family. Contains catalytic and regulatory chains. Requires Zn(2+) as cofactor.

In terms of biological role, involved in allosteric regulation of aspartate carbamoyltransferase. In Vibrio vulnificus (strain CMCP6), this protein is Aspartate carbamoyltransferase regulatory chain.